The chain runs to 335 residues: LIM and SH3 domain protein F42H10.3 (335 aa).

An LIM zinc-binding domain is found at 5–65; that stretch reads CAREDCGKTV…DPHYPKTVAS (61 aa). Nebulin repeat units follow at residues 66 to 97 and 98 to 132; these read VMAD…KMKG and TKIE…QKAR. Positions 128-142 are enriched in basic and acidic residues; the sequence is DQKARQEEVRPKEEI. Disordered stretches follow at residues 128 to 151 and 233 to 264; these read DQKA…PTPI and DFAG…ISPT. Low complexity predominate over residues 242 to 260; sequence SNSISSTSPHSTLSSPQST. The SH3 domain occupies 266–327; sequence KAGFAVKAIY…PANYVQPHKL (62 aa).

In Caenorhabditis elegans, this protein is LIM and SH3 domain protein F42H10.3.